A 93-amino-acid polypeptide reads, in one-letter code: MSRSAKKGPFIHKGLLRKIEEMNEKDEKKVIKVWSRASTIFPQMIGHTIAVHDGRKHVPVYVTEDMVGHKLGEFALTRTYRGHDDDEKTSKRK.

The protein belongs to the universal ribosomal protein uS19 family.

Protein S19 forms a complex with S13 that binds strongly to the 16S ribosomal RNA. The protein is Small ribosomal subunit protein uS19 of Alkaliphilus metalliredigens (strain QYMF).